The sequence spans 182 residues: Large ribosomal subunit protein bL17m (182 aa).

The protein belongs to the bacterial ribosomal protein bL17 family.

Its subcellular location is the mitochondrion. In Dictyostelium discoideum (Social amoeba), this protein is Large ribosomal subunit protein bL17m (mrpl17).